Reading from the N-terminus, the 292-residue chain is Feruloyl esterase B (292 aa).

The first 18 residues, M1–C18, serve as a signal peptide directing secretion. 4 N-linked (GlcNAc...) asparagine glycosylation sites follow: N88, N117, N179, and N245.

The protein belongs to the carbohydrate esterase 1 (CE1) family. Feruloyl esterase type B subfamily.

The protein localises to the secreted. The catalysed reaction is feruloyl-polysaccharide + H2O = ferulate + polysaccharide.. Its function is as follows. Involved in degradation of plant cell walls. Hydrolyzes of the feruloyl-arabinose ester bond in arabinoxylans as well as the feruloyl-galactose and feruloyl-arabinose ester bonds in pectin. The sequence is that of Feruloyl esterase B (fae-1) from Neurospora crassa (strain ATCC 24698 / 74-OR23-1A / CBS 708.71 / DSM 1257 / FGSC 987).